Consider the following 187-residue polypeptide: Probable GTP-binding protein EngB (187 aa).

Residues 18–187 (KNSEIAFWGR…KLKENINSNF (170 aa)) form the EngB-type G domain. Residues 26–33 (GRSNVGKS), 52–56 (GRTQL), 70–73 (DLPG), 137–140 (TKID), and 168–170 (VSS) contribute to the GTP site. Mg(2+)-binding residues include Ser33 and Thr54.

Belongs to the TRAFAC class TrmE-Era-EngA-EngB-Septin-like GTPase superfamily. EngB GTPase family. It depends on Mg(2+) as a cofactor.

Its function is as follows. Necessary for normal cell division and for the maintenance of normal septation. This chain is Probable GTP-binding protein EngB, found in Mycoplasmopsis synoviae (strain 53) (Mycoplasma synoviae).